Reading from the N-terminus, the 264-residue chain is Triosephosphate isomerase (264 aa).

13–15 is a substrate binding site; it reads NWK. Histidine 106 acts as the Electrophile in catalysis. Residue glutamate 179 is the Proton acceptor of the active site. Substrate contacts are provided by residues glycine 185, serine 223, and 244–245; that span reads GG.

This sequence belongs to the triosephosphate isomerase family. Homodimer.

The protein resides in the cytoplasm. It carries out the reaction D-glyceraldehyde 3-phosphate = dihydroxyacetone phosphate. Its pathway is carbohydrate biosynthesis; gluconeogenesis. It functions in the pathway carbohydrate degradation; glycolysis; D-glyceraldehyde 3-phosphate from glycerone phosphate: step 1/1. Involved in the gluconeogenesis. Catalyzes stereospecifically the conversion of dihydroxyacetone phosphate (DHAP) to D-glyceraldehyde-3-phosphate (G3P). The polypeptide is Triosephosphate isomerase (Acinetobacter baumannii (strain SDF)).